The primary structure comprises 287 residues: 4,4'-diapophytoene synthase (287 aa).

(2E,6E)-farnesyl diphosphate contacts are provided by residues 18 to 21, Tyr-41, and Arg-45; that span reads HSKS. Mg(2+) contacts are provided by Asp-48 and Asp-52. A (2E,6E)-farnesyl diphosphate-binding site is contributed by Gln-165. Position 168 (Asn-168) interacts with Mg(2+). A (2E,6E)-farnesyl diphosphate-binding site is contributed by Arg-171. Residue Asp-172 coordinates Mg(2+). Tyr-248 contributes to the (2E,6E)-farnesyl diphosphate binding site.

Belongs to the phytoene/squalene synthase family. CrtM subfamily. The cofactor is Mg(2+).

It carries out the reaction 2 (2E,6E)-farnesyl diphosphate = 15-cis-4,4'-diapophytoene + 2 diphosphate. The protein operates within carotenoid biosynthesis; staphyloxanthin biosynthesis; staphyloxanthin from farnesyl diphosphate: step 1/5. Involved in the biosynthesis of the yellow-orange carotenoid staphyloxanthin, which plays a role in the virulence via its protective function against oxidative stress. Catalyzes the head-to-head condensation of two molecules of farnesyl diphosphate (FPP) into the colorless C(30) carotenoid 4,4'-diapophytoene (dehydrosqualene). This Staphylococcus aureus (strain bovine RF122 / ET3-1) protein is 4,4'-diapophytoene synthase (crtM).